The chain runs to 312 residues: Phosphoribosylaminoimidazole-succinocarboxamide synthase (312 aa).

This sequence belongs to the SAICAR synthetase family.

The enzyme catalyses 5-amino-1-(5-phospho-D-ribosyl)imidazole-4-carboxylate + L-aspartate + ATP = (2S)-2-[5-amino-1-(5-phospho-beta-D-ribosyl)imidazole-4-carboxamido]succinate + ADP + phosphate + 2 H(+). Its pathway is purine metabolism; IMP biosynthesis via de novo pathway; 5-amino-1-(5-phospho-D-ribosyl)imidazole-4-carboxamide from 5-amino-1-(5-phospho-D-ribosyl)imidazole-4-carboxylate: step 1/2. This is Phosphoribosylaminoimidazole-succinocarboxamide synthase from Legionella pneumophila (strain Lens).